A 1005-amino-acid polypeptide reads, in one-letter code: Translation initiation factor IF-2 (1005 aa).

2 disordered regions span residues 54-337 (KYVP…RRPQ) and 368-414 (PKPK…PTSV). The span at 58 to 73 (SPSTHSMPPTRPTSHS) shows a compositional bias: polar residues. Residues 75–86 (PLPPQPGKPQPK) show a composition bias toward pro residues. Polar residues predominate over residues 146 to 157 (GSNSPSHSESTP). Composition is skewed to low complexity over residues 189–198 (PSPAAMAGRA) and 222–240 (VESA…PRAE). Basic and acidic residues predominate over residues 258 to 274 (PRSETSEDGARRGEKLV). Residues 392–401 (GGRKLSRRDR) show a composition bias toward basic residues. Positions 495 to 668 (RRPPVVTIMG…LLVSEVEDLY (174 aa)) constitute a tr-type G domain. A G1 region spans residues 504-511 (GHVDHGKT). 504–511 (GHVDHGKT) provides a ligand contact to GTP. The segment at 529 to 533 (GITQH) is G2. Residues 554–557 (DTPG) form a G3 region. GTP is bound by residues 554–558 (DTPGH) and 608–611 (NKID). Residues 608–611 (NKID) are G4. Residues 644-646 (SAI) are G5.

The protein belongs to the TRAFAC class translation factor GTPase superfamily. Classic translation factor GTPase family. IF-2 subfamily.

It localises to the cytoplasm. One of the essential components for the initiation of protein synthesis. Protects formylmethionyl-tRNA from spontaneous hydrolysis and promotes its binding to the 30S ribosomal subunits. Also involved in the hydrolysis of GTP during the formation of the 70S ribosomal complex. In Cyanothece sp. (strain PCC 7425 / ATCC 29141), this protein is Translation initiation factor IF-2.